The sequence spans 841 residues: Translation initiation factor IF-2 (841 aa).

The tract at residues 94 to 258 (QRSPEEIEAE…HGFQSPTGPV (165 aa)) is disordered. Residues 96–136 (SPEEIEAERKRELEERRAVENAARQKAEEEAKRRAEEEARR) show a composition bias toward basic and acidic residues. Residues 137-173 (QPAAAQPAGTEAVAAPVAPVEAVREAAPVAAAPAPAA) show a composition bias toward low complexity. 3 stretches are compositionally biased toward basic and acidic residues: residues 174–194 (DARK…DNNR), 200–217 (DGER…EKAP), and 225–234 (TTDEESDGFR). A compositionally biased stretch (basic residues) spans 235 to 248 (RGGRGKAKLKKRNA). A tr-type G domain is found at 341–510 (SRAPVVTVMG…LLQAEVLELK (170 aa)). The G1 stretch occupies residues 350-357 (GHVDHGKT). 350–357 (GHVDHGKT) lines the GTP pocket. The interval 375 to 379 (GITQH) is G2. The tract at residues 396-399 (DTPG) is G3. GTP-binding positions include 396-400 (DTPGH) and 450-453 (NKID). The G4 stretch occupies residues 450–453 (NKID). Residues 486–488 (SAK) are G5.

Belongs to the TRAFAC class translation factor GTPase superfamily. Classic translation factor GTPase family. IF-2 subfamily.

Its subcellular location is the cytoplasm. In terms of biological role, one of the essential components for the initiation of protein synthesis. Protects formylmethionyl-tRNA from spontaneous hydrolysis and promotes its binding to the 30S ribosomal subunits. Also involved in the hydrolysis of GTP during the formation of the 70S ribosomal complex. The polypeptide is Translation initiation factor IF-2 (Pseudomonas fluorescens (strain SBW25)).